The sequence spans 351 residues: Fe(3+) ions import ATP-binding protein FbpC (351 aa).

In terms of domain architecture, ABC transporter spans 7 to 237; the sequence is VVLKNICKRF…PKSMFMANFM (231 aa). 39–46 is an ATP binding site; the sequence is GPSGCGKT.

This sequence belongs to the ABC transporter superfamily. Fe(3+) ion importer (TC 3.A.1.10) family. In terms of assembly, the complex is composed of two ATP-binding proteins (FbpC), two transmembrane proteins (FbpB) and a solute-binding protein (FbpA).

Its subcellular location is the cell inner membrane. The catalysed reaction is Fe(3+)(out) + ATP + H2O = Fe(3+)(in) + ADP + phosphate + H(+). In terms of biological role, part of the ABC transporter complex FbpABC involved in Fe(3+) ions import. Responsible for energy coupling to the transport system. In Vibrio cholerae serotype O1 (strain ATCC 39315 / El Tor Inaba N16961), this protein is Fe(3+) ions import ATP-binding protein FbpC.